A 314-amino-acid chain; its full sequence is 4-hydroxy-3-methylbut-2-enyl diphosphate reductase (314 aa).

Residue Cys12 coordinates [4Fe-4S] cluster. (2E)-4-hydroxy-3-methylbut-2-enyl diphosphate-binding residues include His43 and His81. His43 and His81 together coordinate dimethylallyl diphosphate. Isopentenyl diphosphate-binding residues include His43 and His81. Cys103 is a [4Fe-4S] cluster binding site. Residue His131 coordinates (2E)-4-hydroxy-3-methylbut-2-enyl diphosphate. His131 contributes to the dimethylallyl diphosphate binding site. His131 is a binding site for isopentenyl diphosphate. The Proton donor role is filled by Glu133. Thr170 provides a ligand contact to (2E)-4-hydroxy-3-methylbut-2-enyl diphosphate. [4Fe-4S] cluster is bound at residue Cys198. Residues Ser226, Asn228, and Ser271 each contribute to the (2E)-4-hydroxy-3-methylbut-2-enyl diphosphate site. Residues Ser226, Asn228, and Ser271 each coordinate dimethylallyl diphosphate. Isopentenyl diphosphate contacts are provided by Ser226, Asn228, and Ser271.

The protein belongs to the IspH family. Requires [4Fe-4S] cluster as cofactor.

It catalyses the reaction isopentenyl diphosphate + 2 oxidized [2Fe-2S]-[ferredoxin] + H2O = (2E)-4-hydroxy-3-methylbut-2-enyl diphosphate + 2 reduced [2Fe-2S]-[ferredoxin] + 2 H(+). The catalysed reaction is dimethylallyl diphosphate + 2 oxidized [2Fe-2S]-[ferredoxin] + H2O = (2E)-4-hydroxy-3-methylbut-2-enyl diphosphate + 2 reduced [2Fe-2S]-[ferredoxin] + 2 H(+). Its pathway is isoprenoid biosynthesis; dimethylallyl diphosphate biosynthesis; dimethylallyl diphosphate from (2E)-4-hydroxy-3-methylbutenyl diphosphate: step 1/1. The protein operates within isoprenoid biosynthesis; isopentenyl diphosphate biosynthesis via DXP pathway; isopentenyl diphosphate from 1-deoxy-D-xylulose 5-phosphate: step 6/6. Catalyzes the conversion of 1-hydroxy-2-methyl-2-(E)-butenyl 4-diphosphate (HMBPP) into a mixture of isopentenyl diphosphate (IPP) and dimethylallyl diphosphate (DMAPP). Acts in the terminal step of the DOXP/MEP pathway for isoprenoid precursor biosynthesis. The polypeptide is 4-hydroxy-3-methylbut-2-enyl diphosphate reductase (Bacillus subtilis (strain 168)).